Here is a 33-residue protein sequence, read N- to C-terminus: Lysozyme C, spleen isozyme (33 aa).

Belongs to the glycosyl hydrolase 22 family. In terms of assembly, monomer.

It carries out the reaction Hydrolysis of (1-&gt;4)-beta-linkages between N-acetylmuramic acid and N-acetyl-D-glucosamine residues in a peptidoglycan and between N-acetyl-D-glucosamine residues in chitodextrins.. In terms of biological role, lysozymes have primarily a bacteriolytic function; those in tissues and body fluids are associated with the monocyte-macrophage system and enhance the activity of immunoagents. The chain is Lysozyme C, spleen isozyme from Equus caballus (Horse).